Reading from the N-terminus, the 635-residue chain is 1-deoxy-D-xylulose-5-phosphate synthase (635 aa).

Thiamine diphosphate-binding positions include H78 and 119–121 (GHA). D151 is a binding site for Mg(2+). Residues 152-153 (GA), N180, and Y291 each bind thiamine diphosphate. N180 contributes to the Mg(2+) binding site. Residues 305–325 (PAFEDRGGTPVTRGSDGRPPY) form a disordered region. Thiamine diphosphate is bound at residue E374.

This sequence belongs to the transketolase family. DXPS subfamily. Homodimer. Requires Mg(2+) as cofactor. The cofactor is thiamine diphosphate.

The catalysed reaction is D-glyceraldehyde 3-phosphate + pyruvate + H(+) = 1-deoxy-D-xylulose 5-phosphate + CO2. The protein operates within metabolic intermediate biosynthesis; 1-deoxy-D-xylulose 5-phosphate biosynthesis; 1-deoxy-D-xylulose 5-phosphate from D-glyceraldehyde 3-phosphate and pyruvate: step 1/1. Catalyzes the acyloin condensation reaction between C atoms 2 and 3 of pyruvate and glyceraldehyde 3-phosphate to yield 1-deoxy-D-xylulose-5-phosphate (DXP). The sequence is that of 1-deoxy-D-xylulose-5-phosphate synthase from Rhodopirellula baltica (strain DSM 10527 / NCIMB 13988 / SH1).